The primary structure comprises 949 residues: MAADISWDEIKKENVDLEKIPVDEVFQQLKCSREGLSSEEGRNRLQIFGANKLEEKVENKFLKFLGFMWNPLSWVMEAAAIMAIVLANGGGRPPDWQDFVGITCLLIINSTISFIEENNAGNAAAALMANLAPKTKVLRDGRWGEQEAAILVPGDLISIKLGDIVPADARLLEGDPLKIDQSALTGESLPATKHQGDEVFSGSTCKQGEIEAVVIATGVHTFFGKAAHLVDSTNNVGHFQKVLTAIGNFCICSIGIGMLIEIIIMYPIQHRKYRDGIDNLLVLLIGGIPIAMPTVLSVTMAIGSHRLSQQGAITKRMTAIEEMAGMDVLCSDKTGTLTLNKLTVDKNLIEVFSKDVDKDYVILLSARASRVENQDAIDTSIVNMLGDPKEARAGITEVHFLPFNPVEKRTAITYIDTNGEWHRCSKGAPEQIIELCDLKGETKRRAHEIIDKFAERGLRSLGVARQRVPEKDKESAGTPWEFVGLLPLFDPPRHDSAETIRRALDLGVNVKMITGDQLAIGKETGRRLGMGTNMYPSSSLLENKDDTTGGVPVDELIEKADGFAGVFPEHKYEIVRKLQERKHIVGMTGDGVNDAPALKKADIGIAVDDATDAARSASDIVLTEPGLSVIVSAVLTSRAIFQRMKNYTIYAVSITIRIVLGFMLVALIWEFDFSPFMVLIIAILNDGTIMTISKDRVKPSPIPDSWKLKEIFATGVVLGTYMALVTVVFFWLAHDTTFFSDKFGVRSLQGKDEELIAVLYLQVSIISQALIFVTRSRSWSFVERPGLLLLIAFFVAQLIATLIATYAHWEFARIKGCGWGWCGVIWIYSIVTYIPLDILKFITRYTLSGKAWNNMIENRTAFTTKKDYGRGEREAQWALAQRTLHGLKPPESMFEDTATYTELSEIAEQAKKRAEVARLREVHTLKGHVESVVKLKGLDIDNLNQHYTV.

Residues 1–64 are Cytoplasmic-facing; the sequence is MAADISWDEI…EKVENKFLKF (64 aa). The helical transmembrane segment at 65–84 threads the bilayer; it reads LGFMWNPLSWVMEAAAIMAI. The Extracellular portion of the chain corresponds to 85–96; sequence VLANGGGRPPDW. A helical membrane pass occupies residues 97–117; sequence QDFVGITCLLIINSTISFIEE. The Cytoplasmic portion of the chain corresponds to 118-246; it reads NNAGNAAAAL…GHFQKVLTAI (129 aa). Residues 247 to 267 traverse the membrane as a helical segment; that stretch reads GNFCICSIGIGMLIEIIIMYP. Over 268–276 the chain is Extracellular; that stretch reads IQHRKYRDG. The helical transmembrane segment at 277–294 threads the bilayer; the sequence is IDNLLVLLIGGIPIAMPT. At 295–645 the chain is on the cytoplasmic side; it reads VLSVTMAIGS…TSRAIFQRMK (351 aa). Asp-332 acts as the 4-aspartylphosphate intermediate in catalysis. Mg(2+) contacts are provided by Asp-590 and Asp-594. A helical membrane pass occupies residues 646-667; the sequence is NYTIYAVSITIRIVLGFMLVAL. Residues 668 to 672 are Extracellular-facing; that stretch reads IWEFD. A helical membrane pass occupies residues 673 to 695; it reads FSPFMVLIIAILNDGTIMTISKD. At 696–711 the chain is on the cytoplasmic side; the sequence is RVKPSPIPDSWKLKEI. A helical membrane pass occupies residues 712–732; sequence FATGVVLGTYMALVTVVFFWL. The Extracellular portion of the chain corresponds to 733–753; that stretch reads AHDTTFFSDKFGVRSLQGKDE. Residues 754–774 form a helical membrane-spanning segment; sequence ELIAVLYLQVSIISQALIFVT. At 775–786 the chain is on the cytoplasmic side; the sequence is RSRSWSFVERPG. Residues 787-807 form a helical membrane-spanning segment; the sequence is LLLLIAFFVAQLIATLIATYA. The Extracellular segment spans residues 808 to 815; the sequence is HWEFARIK. Residues 816–836 form a helical membrane-spanning segment; it reads GCGWGWCGVIWIYSIVTYIPL. At 837–949 the chain is on the cytoplasmic side; it reads DILKFITRYT…IDNLNQHYTV (113 aa). At Thr-883 the chain carries Phosphothreonine. Phosphoserine is present on Ser-931. The interaction with 14-3-3 proteins stretch occupies residues 947-949; the sequence is YTV. At Thr-948 the chain carries Phosphothreonine.

The protein belongs to the cation transport ATPase (P-type) (TC 3.A.3) family. Type IIIA subfamily. In terms of assembly, binds to 14-3-3 proteins. The binding is induced by phosphorylation of Thr-948. Binding to 14-3-3 proteins activates the H(+)-ATPase. As to expression, expressed in guard cells.

Its subcellular location is the membrane. The enzyme catalyses ATP + H2O + H(+)(in) = ADP + phosphate + 2 H(+)(out). Functionally, the plasma membrane H(+) ATPase of plants and fungi generates a proton gradient that drives the active transport of nutrients by H(+)-symport. The resulting external acidification and/or internal alkinization may mediate growth responses. The polypeptide is ATPase 6, plasma membrane-type (AHA6) (Arabidopsis thaliana (Mouse-ear cress)).